Reading from the N-terminus, the 467-residue chain is Glutamate--tRNA ligase 2 (467 aa).

The 'HIGH' region motif lies at 18–28 (PSPTGYLHVGG). The 'KMSKS' region signature appears at 238 to 242 (PLSKR). Lys-241 is an ATP binding site.

Belongs to the class-I aminoacyl-tRNA synthetase family. Glutamate--tRNA ligase type 1 subfamily. As to quaternary structure, monomer.

It localises to the cytoplasm. It carries out the reaction tRNA(Glu) + L-glutamate + ATP = L-glutamyl-tRNA(Glu) + AMP + diphosphate. Catalyzes the attachment of glutamate to tRNA(Glu) in a two-step reaction: glutamate is first activated by ATP to form Glu-AMP and then transferred to the acceptor end of tRNA(Glu). The protein is Glutamate--tRNA ligase 2 of Fervidobacterium nodosum (strain ATCC 35602 / DSM 5306 / Rt17-B1).